A 283-amino-acid polypeptide reads, in one-letter code: Thymidylate synthase (283 aa).

R22 is a binding site for dUMP. Residue C160 is the Nucleophile of the active site. Residues 180 to 183 (RSCD), N191, and 221 to 223 (HIY) each bind dUMP. A (6R)-5,10-methylene-5,6,7,8-tetrahydrofolate-binding site is contributed by D183. (6R)-5,10-methylene-5,6,7,8-tetrahydrofolate is bound at residue S282.

Belongs to the thymidylate synthase family. Bacterial-type ThyA subfamily. As to quaternary structure, homodimer.

The protein resides in the cytoplasm. It catalyses the reaction dUMP + (6R)-5,10-methylene-5,6,7,8-tetrahydrofolate = 7,8-dihydrofolate + dTMP. It participates in pyrimidine metabolism; dTTP biosynthesis. Functionally, catalyzes the reductive methylation of 2'-deoxyuridine-5'-monophosphate (dUMP) to 2'-deoxythymidine-5'-monophosphate (dTMP) while utilizing 5,10-methylenetetrahydrofolate (mTHF) as the methyl donor and reductant in the reaction, yielding dihydrofolate (DHF) as a by-product. This enzymatic reaction provides an intracellular de novo source of dTMP, an essential precursor for DNA biosynthesis. The sequence is that of Thymidylate synthase from Vibrio atlanticus (strain LGP32) (Vibrio splendidus (strain Mel32)).